The following is a 301-amino-acid chain: Rhodopsin (301 aa).

Over 1 to 18 (LHMIHLHWYQYPPMNPMM) the chain is Extracellular. Residues 19 to 43 (YPLLLVFMLITGILCLAGNFVTIWV) form a helical membrane-spanning segment. The Cytoplasmic segment spans residues 44-55 (FMNTKSLRTPAN). Residues 56-78 (LLVVNLAMSDFLMMFTMFPPMMI) form a helical membrane-spanning segment. The Extracellular segment spans residues 79-92 (TCYYHTWTLGATFC). Cysteines 92 and 169 form a disulfide. The chain crosses the membrane as a helical span at residues 93 to 115 (EVYAFLGNLCGCASIWTMVFITF). The short motif at 116 to 118 (DRY) is the 'Ionic lock' involved in activated form stabilization element. Topologically, residues 116–134 (DRYNVIVKGVAGEPLSTKK) are cytoplasmic. The chain crosses the membrane as a helical span at residues 135 to 155 (ASLWILTVWVLSFTWCVAPFF). Over 156–182 (GWNRYVPEGNLTGCGTDYLSEDILSRS) the chain is Extracellular. A glycan (N-linked (GlcNAc...) asparagine) is linked at asparagine 165. Residues 183 to 204 (YLYIYSTWVYFLPLAITIYCYV) traverse the membrane as a helical segment. The Cytoplasmic segment spans residues 205-245 (FIIKAVAAHEKGMRDQAKKMGIKSLRNEEAQKTSAECRLAK). Residues 246-267 (IAMTTVALWFIAWTPYLLINWV) traverse the membrane as a helical segment. The Extracellular portion of the chain corresponds to 268–278 (GMFARSYLSPV). A helical transmembrane segment spans residues 279-300 (YTIWGYVFAKANAVYNPIVYAI). Residue lysine 288 is modified to N6-(retinylidene)lysine.

The protein belongs to the G-protein coupled receptor 1 family. Opsin subfamily. In terms of assembly, homodimer. Interacts with GNAQ. Contains one covalently linked retinal chromophore.

The protein localises to the cell projection. The protein resides in the rhabdomere membrane. Functionally, photoreceptor required for image-forming vision at low light intensity. Can use both retinal and 3-dehydroretinal as visual pigment. Light-induced isomerization of 11-cis to all-trans retinal triggers a conformational change that activates signaling via G-proteins. Signaling via GNAQ probably mediates the activation of phospholipase C. In Lacunicambarus ludovicianus (Painted devil crayfish), this protein is Rhodopsin (RHO).